Consider the following 265-residue polypeptide: MFNLRDSEKLFIPFITAGDPLPDISVELAISLQNAGASALEIGVPYTDPLADGPVIQRASKRALENGMNIVKAIELGGKMKKNGVHIPIILFTYYNPVLQLEKEYFFALLRENDIDGLLVPDLPLEESALLQMTCKKENIAYISLVAPTSEDRLKIITEQACGFVYCVSSLGVTGVRSEFDPSVYSFIRKVKEFSSVPVAVGFGISNRKQVDGMNEISDGVVVGSALVKKIEELKTKLVNPGTRADALLEFEEYAKTFGRLYSVK.

Active-site proton acceptor residues include Glu41 and Asp52.

The protein belongs to the TrpA family. Tetramer of two alpha and two beta chains.

It catalyses the reaction (1S,2R)-1-C-(indol-3-yl)glycerol 3-phosphate + L-serine = D-glyceraldehyde 3-phosphate + L-tryptophan + H2O. The protein operates within amino-acid biosynthesis; L-tryptophan biosynthesis; L-tryptophan from chorismate: step 5/5. In terms of biological role, the alpha subunit is responsible for the aldol cleavage of indoleglycerol phosphate to indole and glyceraldehyde 3-phosphate. This chain is Tryptophan synthase alpha chain, found in Bacillus velezensis (strain DSM 23117 / BGSC 10A6 / LMG 26770 / FZB42) (Bacillus amyloliquefaciens subsp. plantarum).